Here is a 91-residue protein sequence, read N- to C-terminus: uncharacterized protein (91 aa).

This is an uncharacterized protein from Bacillus anthracis.